The primary structure comprises 374 residues: Phosphatidylglycerol--prolipoprotein diacylglyceryl transferase (374 aa).

A run of 4 helical transmembrane segments spans residues 33 to 53 (ICFI…IALF), 155 to 175 (LCWF…VFFY), 195 to 215 (LASH…TSYI), and 222 to 242 (LSFL…AVFI). R243 serves as a coordination point for a 1,2-diacyl-sn-glycero-3-phospho-(1'-sn-glycerol). Transmembrane regions (helical) follow at residues 279-299 (PVQL…FTLW), 306-326 (LAAG…RFLL), and 341-361 (ILQM…CLVW).

This sequence belongs to the Lgt family.

The protein localises to the cell inner membrane. It carries out the reaction L-cysteinyl-[prolipoprotein] + a 1,2-diacyl-sn-glycero-3-phospho-(1'-sn-glycerol) = an S-1,2-diacyl-sn-glyceryl-L-cysteinyl-[prolipoprotein] + sn-glycerol 1-phosphate + H(+). It functions in the pathway protein modification; lipoprotein biosynthesis (diacylglyceryl transfer). In terms of biological role, catalyzes the transfer of the diacylglyceryl group from phosphatidylglycerol to the sulfhydryl group of the N-terminal cysteine of a prolipoprotein, the first step in the formation of mature lipoproteins. The polypeptide is Phosphatidylglycerol--prolipoprotein diacylglyceryl transferase (Protochlamydia amoebophila (strain UWE25)).